Here is a 98-residue protein sequence, read N- to C-terminus: uncharacterized protein (98 aa).

This is an uncharacterized protein from Archaeoglobus fulgidus (strain ATCC 49558 / DSM 4304 / JCM 9628 / NBRC 100126 / VC-16).